A 437-amino-acid chain; its full sequence is Aspartokinase (437 aa).

Belongs to the aspartokinase family.

It carries out the reaction L-aspartate + ATP = 4-phospho-L-aspartate + ADP. Its pathway is amino-acid biosynthesis; L-lysine biosynthesis via DAP pathway; (S)-tetrahydrodipicolinate from L-aspartate: step 1/4. It participates in amino-acid biosynthesis; L-methionine biosynthesis via de novo pathway; L-homoserine from L-aspartate: step 1/3. It functions in the pathway amino-acid biosynthesis; L-threonine biosynthesis; L-threonine from L-aspartate: step 1/5. In Chlamydia muridarum (strain MoPn / Nigg), this protein is Aspartokinase (lysC).